The following is a 550-amino-acid chain: Glucose-6-phosphate isomerase (550 aa).

The Proton donor role is filled by E357. Residues H388 and K516 contribute to the active site.

Belongs to the GPI family.

The protein localises to the cytoplasm. The catalysed reaction is alpha-D-glucose 6-phosphate = beta-D-fructose 6-phosphate. Its pathway is carbohydrate biosynthesis; gluconeogenesis. The protein operates within carbohydrate degradation; glycolysis; D-glyceraldehyde 3-phosphate and glycerone phosphate from D-glucose: step 2/4. Its function is as follows. Catalyzes the reversible isomerization of glucose-6-phosphate to fructose-6-phosphate. The polypeptide is Glucose-6-phosphate isomerase (Psychromonas ingrahamii (strain DSM 17664 / CCUG 51855 / 37)).